A 180-amino-acid chain; its full sequence is Probable chorismate pyruvate-lyase (180 aa).

Arg82, Leu120, and Glu165 together coordinate substrate.

Belongs to the UbiC family.

The protein resides in the cytoplasm. It carries out the reaction chorismate = 4-hydroxybenzoate + pyruvate. The protein operates within cofactor biosynthesis; ubiquinone biosynthesis. In terms of biological role, removes the pyruvyl group from chorismate, with concomitant aromatization of the ring, to provide 4-hydroxybenzoate (4HB) for the ubiquinone pathway. This Aliivibrio fischeri (strain ATCC 700601 / ES114) (Vibrio fischeri) protein is Probable chorismate pyruvate-lyase.